The sequence spans 83 residues: NAD(P)H-quinone oxidoreductase subunit L (83 aa).

The next 2 helical transmembrane spans lie at 15–35 and 53–73; these read LMVL…VPLL and LSAY…APFL.

The protein belongs to the complex I NdhL subunit family. NDH-1 can be composed of about 15 different subunits; different subcomplexes with different compositions have been identified which probably have different functions.

It localises to the cellular thylakoid membrane. The catalysed reaction is a plastoquinone + NADH + (n+1) H(+)(in) = a plastoquinol + NAD(+) + n H(+)(out). The enzyme catalyses a plastoquinone + NADPH + (n+1) H(+)(in) = a plastoquinol + NADP(+) + n H(+)(out). Functionally, NDH-1 shuttles electrons from an unknown electron donor, via FMN and iron-sulfur (Fe-S) centers, to quinones in the respiratory and/or the photosynthetic chain. The immediate electron acceptor for the enzyme in this species is believed to be plastoquinone. Couples the redox reaction to proton translocation, and thus conserves the redox energy in a proton gradient. Cyanobacterial NDH-1 also plays a role in inorganic carbon-concentration. The chain is NAD(P)H-quinone oxidoreductase subunit L from Prochlorococcus marinus (strain MIT 9303).